We begin with the raw amino-acid sequence, 534 residues long: Glucans biosynthesis protein D (534 aa).

A signal peptide (tat-type signal) is located at residues 1 to 26; the sequence is MQRRDFIRNASLALAAFGLPSLPACA.

This sequence belongs to the OpgD/OpgG family. In terms of processing, predicted to be exported by the Tat system. The position of the signal peptide cleavage has not been experimentally proven.

It localises to the periplasm. Its pathway is glycan metabolism; osmoregulated periplasmic glucan (OPG) biosynthesis. Probably involved in the control of the structural glucose backbone of osmoregulated periplasmic glucans (OPGs). The polypeptide is Glucans biosynthesis protein D (Stenotrophomonas maltophilia (strain R551-3)).